Here is a 464-residue protein sequence, read N- to C-terminus: Trigger factor (464 aa).

Residues 166–245 form the PPIase FKBP-type domain; sequence GDFLTIDITA…VKAVKERELP (80 aa). The disordered stretch occupies residues 426-464; it reads FVRPGGEEEAPAAEVTEADTAEGEATEVPAEDEKAEAKA. Residues 432–455 are compositionally biased toward acidic residues; sequence EEEAPAAEVTEADTAEGEATEVPA.

Belongs to the FKBP-type PPIase family. Tig subfamily.

It localises to the cytoplasm. The catalysed reaction is [protein]-peptidylproline (omega=180) = [protein]-peptidylproline (omega=0). Its function is as follows. Involved in protein export. Acts as a chaperone by maintaining the newly synthesized protein in an open conformation. Functions as a peptidyl-prolyl cis-trans isomerase. The protein is Trigger factor of Pseudarthrobacter chlorophenolicus (strain ATCC 700700 / DSM 12829 / CIP 107037 / JCM 12360 / KCTC 9906 / NCIMB 13794 / A6) (Arthrobacter chlorophenolicus).